The following is a 108-amino-acid chain: uncharacterized protein (108 aa).

Belongs to the UPF0440 family.

This is an uncharacterized protein from Thermococcus kodakarensis (strain ATCC BAA-918 / JCM 12380 / KOD1) (Pyrococcus kodakaraensis (strain KOD1)).